We begin with the raw amino-acid sequence, 133 residues long: Interleukin-4 (133 aa).

An N-terminal signal peptide occupies residues 1–24 (MGLTSQLIPMLVCLLACTSNFVHG). 3 disulfides stabilise this stretch: C27/C133, C48/C85, and C70/C105. N-linked (GlcNAc...) asparagine glycosylation is found at N62, N96, and N102.

The protein belongs to the IL-4/IL-13 family.

It localises to the secreted. Participates in at least several B-cell activation processes as well as of other cell types. It is a costimulator of DNA-synthesis. It induces the expression of class II MHC molecules on resting B-cells. It enhances both secretion and cell surface expression of IgE and IgG1. It also regulates the expression of the low affinity Fc receptor for IgE (CD23) on both lymphocytes and monocytes. Positively regulates IL31RA expression in macrophages. Stimulates autophagy in dendritic cells by interfering with mTORC1 signaling and through the induction of RUFY4. This Tursiops truncatus (Atlantic bottle-nosed dolphin) protein is Interleukin-4 (IL4).